The chain runs to 200 residues: NAD(P)H dehydrogenase (quinone) (200 aa).

The Flavodoxin-like domain occupies 4–191 (VLVLYYSMYG…DIARFQGKHV (188 aa)). Residues 10–15 (SMYGHI) and 79–81 (TRF) contribute to the FMN site. Y12 serves as a coordination point for NAD(+). W99 lines the substrate pocket. FMN-binding positions include 114-120 (STGTQHG) and H135.

This sequence belongs to the WrbA family. It depends on FMN as a cofactor.

The enzyme catalyses a quinone + NADH + H(+) = a quinol + NAD(+). It carries out the reaction a quinone + NADPH + H(+) = a quinol + NADP(+). The sequence is that of NAD(P)H dehydrogenase (quinone) from Paraburkholderia phytofirmans (strain DSM 17436 / LMG 22146 / PsJN) (Burkholderia phytofirmans).